The following is a 719-amino-acid chain: Protein Hook homolog 2 (719 aa).

Residues 1 to 161 (MSVDKAELCG…ELMTKDTPDS (161 aa)) are required for localization to the centrosome and induction of aggresome formation. The tract at residues 1–548 (MSVDKAELCG…LKRKLEEHLQ (548 aa)) is sufficient for interaction with microtubules. The Calponin-homology (CH) domain maps to 6–122 (AELCGSLLTW…KLLQLVLGCA (117 aa)). At S163 the chain carries Phosphoserine. 2 coiled-coil regions span residues 180 to 427 (LSEE…AQLQ) and 455 to 607 (AELR…VDKA). Residue T230 is modified to Phosphothreonine. The required for localization to the centrosome and induction of aggresome formation stretch occupies residues 533–719 (DAISILLKRK…SLNLRPTDKH (187 aa)). Positions 584–719 (HNLQKKDADL…SLNLRPTDKH (136 aa)) are sufficient for interaction with CNTRL. The interval 696–719 (LATNSRRGPLGRLASLNLRPTDKH) is disordered. S710 carries the phosphoserine modification.

This sequence belongs to the hook family. Self-associates. Component of the FTS/Hook/FHIP complex (FHF complex), composed of AKTIP/FTS, FHIP1B, and one or more members of the Hook family of proteins HOOK1, HOOK2, and HOOK3. May interact directly with AKTIP/FTS, HOOK1 and HOOK3. Associates with several subunits of the homotypic vesicular sorting complex (the HOPS complex) including VPS16 and VPS41; these interactions may be indirect. Interacts with CNTRL. Interacts with microtubules. Interacts with ZC3H14. Interacts with LRGUK (via guanylate kinase-like domain). Interacts with CCDC181. Interacts with AP4M1; the interaction is direct, mediates the interaction between FTS-Hook-FHIP (FHF) complex and AP-4 and the perinuclear distribution of AP-4.

Its subcellular location is the cytoplasm. It is found in the cytoskeleton. It localises to the microtubule organizing center. The protein resides in the centrosome. The protein localises to the golgi apparatus. Its subcellular location is the trans-Golgi network. Component of the FTS/Hook/FHIP complex (FHF complex). The FHF complex may function to promote vesicle trafficking and/or fusion via the homotypic vesicular protein sorting complex (the HOPS complex). Contributes to the establishment and maintenance of centrosome function. May function in the positioning or formation of aggresomes, which are pericentriolar accumulations of misfolded proteins, proteasomes and chaperones. FHF complex promotes the distribution of AP-4 complex to the perinuclear area of the cell. This chain is Protein Hook homolog 2 (HOOK2), found in Homo sapiens (Human).